Here is a 463-residue protein sequence, read N- to C-terminus: L-seryl-tRNA(Sec) selenium transferase (463 aa).

Lys-295 is subject to N6-(pyridoxal phosphate)lysine.

Belongs to the SelA family. In terms of assembly, homodecamer; pentamer of dimers. Binds only one seryl-tRNA(Sec) per dimer. The cofactor is pyridoxal 5'-phosphate.

The protein localises to the cytoplasm. It catalyses the reaction L-seryl-tRNA(Sec) + selenophosphate + H(+) = L-selenocysteinyl-tRNA(Sec) + phosphate. It participates in aminoacyl-tRNA biosynthesis; selenocysteinyl-tRNA(Sec) biosynthesis; selenocysteinyl-tRNA(Sec) from L-seryl-tRNA(Sec) (bacterial route): step 1/1. Converts seryl-tRNA(Sec) to selenocysteinyl-tRNA(Sec) required for selenoprotein biosynthesis. In Proteus mirabilis (strain HI4320), this protein is L-seryl-tRNA(Sec) selenium transferase.